A 366-amino-acid polypeptide reads, in one-letter code: 3-isopropylmalate dehydrogenase (366 aa).

76–89 provides a ligand contact to NAD(+); sequence GPKWDANPSHLRPE. 4 residues coordinate substrate: R96, R106, R134, and D219. Mg(2+)-binding residues include D219, D243, and D247. Residue 277–289 participates in NAD(+) binding; sequence GSAPDIAGKGIAN.

It belongs to the isocitrate and isopropylmalate dehydrogenases family. LeuB type 1 subfamily. Homodimer. It depends on Mg(2+) as a cofactor. The cofactor is Mn(2+).

The protein localises to the cytoplasm. The catalysed reaction is (2R,3S)-3-isopropylmalate + NAD(+) = 4-methyl-2-oxopentanoate + CO2 + NADH. It functions in the pathway amino-acid biosynthesis; L-leucine biosynthesis; L-leucine from 3-methyl-2-oxobutanoate: step 3/4. Functionally, catalyzes the oxidation of 3-carboxy-2-hydroxy-4-methylpentanoate (3-isopropylmalate) to 3-carboxy-4-methyl-2-oxopentanoate. The product decarboxylates to 4-methyl-2 oxopentanoate. The sequence is that of 3-isopropylmalate dehydrogenase from Oceanobacillus iheyensis (strain DSM 14371 / CIP 107618 / JCM 11309 / KCTC 3954 / HTE831).